The primary structure comprises 94 residues: MRQYEVMYILKPDLEDEESTQLIEKFSKIITDRDGEITELNRWGKRRLAYEIKDYREGHYVVMKCRAEHAAAQELDRVFRITDGLLRHMIIRED.

The protein belongs to the bacterial ribosomal protein bS6 family.

Its function is as follows. Binds together with bS18 to 16S ribosomal RNA. The sequence is that of Small ribosomal subunit protein bS6 from Desulforudis audaxviator (strain MP104C).